Reading from the N-terminus, the 180-residue chain is Large ribosomal subunit protein uL16 (180 aa).

It belongs to the universal ribosomal protein uL16 family.

The protein is Large ribosomal subunit protein uL16 of Pyrobaculum aerophilum (strain ATCC 51768 / DSM 7523 / JCM 9630 / CIP 104966 / NBRC 100827 / IM2).